The primary structure comprises 63 residues: Beta-toxin NaTx36 (63 aa).

In terms of domain architecture, LCN-type CS-alpha/beta spans 1–62 (KDGYPMRSDG…VYDSATSKCR (62 aa)). 4 disulfide bridges follow: Cys11–Cys61, Cys15–Cys36, Cys22–Cys43, and Cys26–Cys45.

This sequence belongs to the long (4 C-C) scorpion toxin superfamily. Sodium channel inhibitor family. Beta subfamily. As to expression, expressed by the venom gland.

The protein resides in the secreted. Functionally, beta toxins bind sodium channels (Nav) and shift the voltage of activation towards more negative potentials thereby affecting sodium channel activation and promoting spontaneous and repetitive firing. Only when tested on grasshopper mouse channels, this toxin inhibits Nav1.8/SCN10A sodium currents in a concentration and voltage-dependent manner (IC(50)=680 nM). This toxin hyperpolarizes the voltage dependence of Nav1.8/SCN10A activation, as well as steady-state fast inactivation and slow inactivation. In contrast to most beta scorpion toxins, this toxin inhibits grasshopper mouse Nav1.8/SCN10A currents through modulation of the domain I S4 voltage sensor, and the domain II second S5-S6 extracellular pore loop. The chain is Beta-toxin NaTx36 from Centruroides sculpturatus (Arizona bark scorpion).